A 582-amino-acid chain; its full sequence is Putative G-protein coupled receptor B0244.10 (582 aa).

The next 4 helical transmembrane spans lie at 25-45 (LYII…PLGL), 70-90 (ITFS…GFAV), 120-140 (WTFF…GLVI), and 159-179 (LLVQ…VFLT). Residue asparagine 190 is glycosylated (N-linked (GlcNAc...) asparagine). Residues 199-218 (LTLGKWFIALYRFLFQMTNI) traverse the membrane as a helical segment. N-linked (GlcNAc...) asparagine glycosylation is found at asparagine 221 and asparagine 237. Helical transmembrane passes span 253–273 (SLMI…AVLV), 296–316 (YIFV…IIII), 329–349 (TFAF…SLLG), 377–397 (IYII…PFGL), and 421–441 (WLLF…LLFV). The N-linked (GlcNAc...) asparagine glycan is linked to asparagine 457. 2 helical membrane-spanning segments follow: residues 475–495 (TILV…AAFG) and 513–533 (LIFP…TFLL). N-linked (GlcNAc...) asparagine glycosylation occurs at asparagine 538.

Belongs to the G-protein coupled receptor 1 family. B0244 subfamily.

It is found in the cell membrane. In Caenorhabditis elegans, this protein is Putative G-protein coupled receptor B0244.10.